The following is a 292-amino-acid chain: ATP synthase gamma chain (292 aa).

It belongs to the ATPase gamma chain family. F-type ATPases have 2 components, CF(1) - the catalytic core - and CF(0) - the membrane proton channel. CF(1) has five subunits: alpha(3), beta(3), gamma(1), delta(1), epsilon(1). CF(0) has three main subunits: a, b and c.

The protein localises to the cell inner membrane. Functionally, produces ATP from ADP in the presence of a proton gradient across the membrane. The gamma chain is believed to be important in regulating ATPase activity and the flow of protons through the CF(0) complex. The sequence is that of ATP synthase gamma chain from Hydrogenobaculum sp. (strain Y04AAS1).